A 281-amino-acid chain; its full sequence is 3-hydroxyanthranilate 3,4-dioxygenase (281 aa).

The segment at 1-162 (MSGVTAIEIP…SNEFKTGKPG (162 aa)) is domain A (catalytic). Arg45 serves as a coordination point for O2. Fe cation-binding residues include His49, Glu55, and His93. Glu55 serves as a coordination point for substrate. Substrate is bound by residues Arg97 and Glu107. A linker region spans residues 163-179 (KGTFACNAPYEARWTDL). Residues 180-281 (PVPINRKEFI…GFAITIRMPA (102 aa)) form a domain B region.

The protein belongs to the 3-HAO family. Fe(2+) is required as a cofactor.

The protein resides in the cytoplasm. It carries out the reaction 3-hydroxyanthranilate + O2 = (2Z,4Z)-2-amino-3-carboxymuconate 6-semialdehyde. Its pathway is cofactor biosynthesis; NAD(+) biosynthesis; quinolinate from L-kynurenine: step 3/3. In terms of biological role, catalyzes the oxidative ring opening of 3-hydroxyanthranilate to 2-amino-3-carboxymuconate semialdehyde, which spontaneously cyclizes to quinolinate. The protein is 3-hydroxyanthranilate 3,4-dioxygenase (haao-1) of Caenorhabditis elegans.